The primary structure comprises 739 residues: MTLEMSPEQIQESKIYREWGLTDEEYLKIKDEILGGRLPNFTETGMYAVMWSEHCCYKNSKPVLKKFPTTGPQVLMGPGEGAGVVDIGDDLAVVFKAESHNHPSYVEPYEGAATGSGGIIRDIFSMGARPIAILDSLRFGPIDNGKTRHIVDQVTAGIAGYGNCIGIPTVGGEVAFDESYAGNPLVNVMCVGLIEHKHIQKGQAKGVGNSIFYVGAKTGRDGIHGASFASKEFGSGSETQRSAVQVGDPFMEKLLLEACIEVIQNHGDILVGIQDMGAAGLVSSTSEMASKAGSGLRLNLDNVPQRETEMIPYEMMLSESQERMVLCVKKGHEQEIIDLFKKYDLDAVNIGEVTDDGFYTLYHKGQMVAHVPVDSLAEDAPTYYREAKVPERIQKFTDSEKYLPEITDSAVSEIFKKLLAQPTIASKKSIYETYDSRVMTNTVVAPGSDAAVLRVRGTNKALAMTTDCNARYLYLDPEKGGAIAVAEAARNIVASGGKPLAITDCLNFGNPEKPEQFWELTTAADGISRSCLALDTPVISGNVSLYNETNGSAILPTPMIGMVGLIEDVKNITTQEFKKAGDLIVLVGQIFDDFSGSELQKMLTGEISGKIDFDLETEKVNQDFVLKAITDGLINSAHDLSEGGLAIALAESAFANGLGIDVEVDLSNAQLFSETQGRFVLSISPENQAAFEKLLTESSASSEVIGKVTDNGILKINELSISTDEAVSIYEGALPCLMK.

Residue H54 is part of the active site. The ATP site is built by Y57 and K96. E98 serves as a coordination point for Mg(2+). Substrate contacts are provided by residues 99–102 (SHNH) and R121. Residue H100 is the Proton acceptor of the active site. A Mg(2+)-binding site is contributed by D122. Q245 provides a ligand contact to substrate. Mg(2+) is bound at residue D275. 319-321 (ESQ) is a substrate binding site. 2 residues coordinate ATP: D504 and G541. N542 serves as a coordination point for Mg(2+). Residue S544 coordinates substrate.

Belongs to the FGAMS family. In terms of assembly, monomer. Part of the FGAM synthase complex composed of 1 PurL, 1 PurQ and 2 PurS subunits.

Its subcellular location is the cytoplasm. It catalyses the reaction N(2)-formyl-N(1)-(5-phospho-beta-D-ribosyl)glycinamide + L-glutamine + ATP + H2O = 2-formamido-N(1)-(5-O-phospho-beta-D-ribosyl)acetamidine + L-glutamate + ADP + phosphate + H(+). Its pathway is purine metabolism; IMP biosynthesis via de novo pathway; 5-amino-1-(5-phospho-D-ribosyl)imidazole from N(2)-formyl-N(1)-(5-phospho-D-ribosyl)glycinamide: step 1/2. In terms of biological role, part of the phosphoribosylformylglycinamidine synthase complex involved in the purines biosynthetic pathway. Catalyzes the ATP-dependent conversion of formylglycinamide ribonucleotide (FGAR) and glutamine to yield formylglycinamidine ribonucleotide (FGAM) and glutamate. The FGAM synthase complex is composed of three subunits. PurQ produces an ammonia molecule by converting glutamine to glutamate. PurL transfers the ammonia molecule to FGAR to form FGAM in an ATP-dependent manner. PurS interacts with PurQ and PurL and is thought to assist in the transfer of the ammonia molecule from PurQ to PurL. The sequence is that of Phosphoribosylformylglycinamidine synthase subunit PurL from Lactococcus lactis subsp. cremoris (Streptococcus cremoris).